A 513-amino-acid polypeptide reads, in one-letter code: Flavonoid 3'-monooxygenase (513 aa).

Residues 1-21 traverse the membrane as a helical segment; the sequence is MATLFLTILLATVLFLILRIF. Topologically, residues 22-513 are cytoplasmic; it reads SHRRNRSHNN…APNVYGLGSG (492 aa). Heme is bound at residue C445.

This sequence belongs to the cytochrome P450 family. Heme serves as cofactor. In terms of tissue distribution, high expression in siliques and to a lower extent in stems, flowers and senescing leaves.

The protein resides in the endoplasmic reticulum membrane. The enzyme catalyses a 3'-unsubstituted flavone + reduced [NADPH--hemoprotein reductase] + O2 = a 3'-hydroxyflavone + oxidized [NADPH--hemoprotein reductase] + H2O + H(+). It participates in secondary metabolite biosynthesis; flavonoid biosynthesis. Catalyzes the 3'-hydroxylation of the flavonoid B-ring to the 3',4'-hydroxylated state. Convert naringenin to eriodictyol and dihydrokaempferol to dihydroquercetin. The protein is Flavonoid 3'-monooxygenase (CYP75B1) of Arabidopsis thaliana (Mouse-ear cress).